The following is a 258-amino-acid chain: Alpha-hydroxynitrile lyase (258 aa).

Catalysis depends on proton donor/acceptor residues serine 81 and histidine 236.

Belongs to the AB hydrolase superfamily. Hydroxynitrile lyase family. In terms of assembly, homodimer.

It catalyses the reaction (R)-mandelonitrile = benzaldehyde + hydrogen cyanide. Functionally, involved in cyanogenesis, the release of HCN from injured tissues. Displays R-selective hydroxynitrile lyase activity. Also accepts nitromethane (MeNO2) as a donor in a reaction with aromatic aldehydes to yield (R)-beta-nitro alcohols. The protein is Alpha-hydroxynitrile lyase of Arabidopsis thaliana (Mouse-ear cress).